A 278-amino-acid polypeptide reads, in one-letter code: DegV domain-containing protein YejH (278 aa).

In terms of domain architecture, DegV spans 3–277; the sequence is IKIVTDSSIT…PGAWAIMIDY (275 aa). The hexadecanoate site is built by Thr-60 and Ser-92.

May bind long-chain fatty acids, such as palmitate, and may play a role in lipid transport or fatty acid metabolism. The sequence is that of DegV domain-containing protein YejH (yejH) from Lactococcus lactis subsp. lactis (strain IL1403) (Streptococcus lactis).